A 257-amino-acid polypeptide reads, in one-letter code: Transmembrane protein C257L (257 aa).

Helical transmembrane passes span 123–143 and 163–183; these read LELL…FTAL and MMIF…YVLV.

It belongs to the asfivirus C257R family.

The protein localises to the host membrane. It localises to the virion. The chain is Transmembrane protein C257L from African swine fever virus (strain Badajoz 1971 Vero-adapted) (Ba71V).